Consider the following 247-residue polypeptide: Orotidine 5'-phosphate decarboxylase (247 aa).

Substrate-binding positions include aspartate 21, lysine 43, 70-79, threonine 129, arginine 190, glutamine 199, glycine 219, and arginine 220; that span reads DMKFHDIPNT. The Proton donor role is filled by lysine 72.

It belongs to the OMP decarboxylase family. Type 1 subfamily. As to quaternary structure, homodimer.

The catalysed reaction is orotidine 5'-phosphate + H(+) = UMP + CO2. It functions in the pathway pyrimidine metabolism; UMP biosynthesis via de novo pathway; UMP from orotate: step 2/2. Functionally, catalyzes the decarboxylation of orotidine 5'-monophosphate (OMP) to uridine 5'-monophosphate (UMP). The protein is Orotidine 5'-phosphate decarboxylase of Chromobacterium violaceum (strain ATCC 12472 / DSM 30191 / JCM 1249 / CCUG 213 / NBRC 12614 / NCIMB 9131 / NCTC 9757 / MK).